Reading from the N-terminus, the 172-residue chain is 3-phenylpropionate/cinnamic acid dioxygenase subunit beta (172 aa).

It belongs to the bacterial ring-hydroxylating dioxygenase beta subunit family. As to quaternary structure, this dioxygenase system consists of four proteins: the two subunits of the hydroxylase component (HcaE and HcaF), a ferredoxin (HcaC) and a ferredoxin reductase (HcaD).

It carries out the reaction 3-phenylpropanoate + NADH + O2 + H(+) = 3-(cis-5,6-dihydroxycyclohexa-1,3-dien-1-yl)propanoate + NAD(+). The catalysed reaction is (E)-cinnamate + NADH + O2 + H(+) = (2E)-3-(cis-5,6-dihydroxycyclohexa-1,3-dien-1-yl)prop-2-enoate + NAD(+). It functions in the pathway aromatic compound metabolism; 3-phenylpropanoate degradation. Functionally, part of the multicomponent 3-phenylpropionate dioxygenase. Converts 3-phenylpropionic acid (PP) and cinnamic acid (CI) into 3-phenylpropionate-dihydrodiol (PP-dihydrodiol) and cinnamic acid-dihydrodiol (CI-dihydrodiol), respectively. This is 3-phenylpropionate/cinnamic acid dioxygenase subunit beta from Shigella boydii serotype 4 (strain Sb227).